The following is a 1440-amino-acid chain: ABC transporter G family member 46 (1440 aa).

Residues 1–42 (MDDDVDAGEIYAVDRQREEGSASAAAFSRSPSTGRVDDDDDD) form a disordered region. A compositionally biased stretch (low complexity) spans 21–32 (SASAAAFSRSPS). The ABC transporter 1 domain occupies 137–419 (ANTLHMTTRS…FKSLGFKCLE (283 aa)). ATP is bound at residue 170–177 (GSPGSGKT). The ABC transmembrane type-2 1 domain occupies 497–710 (KILKANIDRE…ALNALAVNEF (214 aa)). The next 7 helical transmembrane spans lie at 516–536 (LYIF…SVFI), 561–581 (AIMF…PVFF), 603–623 (TPIS…VIGF), 634–654 (FLVL…IAAL), 659–679 (VVAS…SGFI), 688–708 (WLIW…LAVN), and 745–765 (IGLG…TICL). A disordered region spans residues 794–829 (DQEPSSGGRVTNDKRYTEGGNNDEATSSNANHNSSP). Over residues 812 to 829 (GGNNDEATSSNANHNSSP) the composition is skewed to polar residues. An ABC transporter 2 domain is found at 843–1095 (MTFEDIRYSI…ELIKYFESIE (253 aa)). An ATP-binding site is contributed by 888–895 (GISGAGKT). One can recognise an ABC transmembrane type-2 2 domain in the interval 1168 to 1382 (IQCLACLWKQ…TINGLVTSQF (215 aa)). The next 7 membrane-spanning stretches (helical) occupy residues 1188–1208 (IAVN…MFWG), 1219–1236 (LLSA…LGVQ), 1271–1291 (VVVE…IVYS), 1302–1322 (FFWY…YGMM), 1332–1352 (MSSI…GFLI), 1357–1377 (IPIW…INGL), and 1410–1430 (LWVA…LFGF).

This sequence belongs to the ABC transporter superfamily. ABCG family. PDR (TC 3.A.1.205) subfamily.

The protein localises to the membrane. Its function is as follows. May be a general defense protein. The protein is ABC transporter G family member 46 of Oryza sativa subsp. japonica (Rice).